The primary structure comprises 680 residues: MNGRKLPDGGVLYDDTDESEDDIEVEGDASVAAPLAATVDWNAGSLNETGLLGAELIGEFVKRLPNSPGVYRMFNAEGDVLYVGKARSLKKRVNNYAVGRVHSNRIAQMVRQTANMEFVTTRTETEALLLEANLIKRLRPRFNVLLRDDKSFPYILITGDHRAPAIFKHRGARARKGDYFGPFASAGAVGRTINSLQRAFLIRTCTDSVFETRTRPCLLYQIKRCSGPCTHEVSDGGYGELVQEAKDFLSGKSQKVKSHMAEAMNQAAEDLDFERAAIYRDRLAALSHVQSHQGINPAGVEEADVFAIHHEGGISCIQVFFFRTGQNWGNRAYFPKADPQLSSAEVLNSFLAQFYDDKPVPKQIMLSQTVEELELLAAALSEKAGHKVSMLVPQRGEKRDLVDHVVGNAREAHGRKLAETASQSRLLEGFKETFGLAYAPQRIEIYDNSHIMGTNAVGGMVVAGPEGFVKNQYRKFNIKSTDITPGDDFGMMKEVMTRRFSRLIKEEGIPDRTAQVATPDAADMPFPTWPDVILIDGGQGQMTAVRAILAELGITDSVTAIGIAKGVDRDAGRERFFPPGRESFTLPPRDPVLYFIQRMRDEAHRFAIGSHRARRKKEMIKNPLDEIGGIGPSRKRALLQHFGTAKAVSRAALSDLMAVEGISEAVARQVYNHFHDDAAK.

One can recognise a GIY-YIG domain in the interval 66 to 144 (NSPGVYRMFN…IKRLRPRFNV (79 aa)). A UVR domain is found at 254–289 (QKVKSHMAEAMNQAAEDLDFERAAIYRDRLAALSHV).

It belongs to the UvrC family. Interacts with UvrB in an incision complex.

The protein resides in the cytoplasm. Its function is as follows. The UvrABC repair system catalyzes the recognition and processing of DNA lesions. UvrC both incises the 5' and 3' sides of the lesion. The N-terminal half is responsible for the 3' incision and the C-terminal half is responsible for the 5' incision. The protein is UvrABC system protein C of Rhizobium johnstonii (strain DSM 114642 / LMG 32736 / 3841) (Rhizobium leguminosarum bv. viciae).